We begin with the raw amino-acid sequence, 425 residues long: Serine--tRNA ligase (425 aa).

230–232 (TAE) is an L-serine binding site. 261–263 (RQE) lines the ATP pocket. Position 284 (Glu-284) interacts with L-serine. Residue 348 to 351 (EISS) coordinates ATP. L-serine is bound at residue Ser-384.

It belongs to the class-II aminoacyl-tRNA synthetase family. Type-1 seryl-tRNA synthetase subfamily. Homodimer. The tRNA molecule binds across the dimer.

The protein resides in the cytoplasm. The catalysed reaction is tRNA(Ser) + L-serine + ATP = L-seryl-tRNA(Ser) + AMP + diphosphate + H(+). It carries out the reaction tRNA(Sec) + L-serine + ATP = L-seryl-tRNA(Sec) + AMP + diphosphate + H(+). It functions in the pathway aminoacyl-tRNA biosynthesis; selenocysteinyl-tRNA(Sec) biosynthesis; L-seryl-tRNA(Sec) from L-serine and tRNA(Sec): step 1/1. Its function is as follows. Catalyzes the attachment of serine to tRNA(Ser). Is also able to aminoacylate tRNA(Sec) with serine, to form the misacylated tRNA L-seryl-tRNA(Sec), which will be further converted into selenocysteinyl-tRNA(Sec). The protein is Serine--tRNA ligase of Caldanaerobacter subterraneus subsp. tengcongensis (strain DSM 15242 / JCM 11007 / NBRC 100824 / MB4) (Thermoanaerobacter tengcongensis).